The primary structure comprises 166 residues: Ribosome maturation factor RimM (166 aa).

In terms of domain architecture, PRC barrel spans 91-163 (DDGFYDHELE…TCVITPPEGL (73 aa)).

Belongs to the RimM family. Binds ribosomal protein uS19.

Its subcellular location is the cytoplasm. An accessory protein needed during the final step in the assembly of 30S ribosomal subunit, possibly for assembly of the head region. Essential for efficient processing of 16S rRNA. May be needed both before and after RbfA during the maturation of 16S rRNA. It has affinity for free ribosomal 30S subunits but not for 70S ribosomes. The polypeptide is Ribosome maturation factor RimM (Corynebacterium diphtheriae (strain ATCC 700971 / NCTC 13129 / Biotype gravis)).